Here is a 288-residue protein sequence, read N- to C-terminus: PAK4-inhibitor inka2 (288 aa).

Residues 159 to 196 (DPTDWTTSLLTRGRNRQPLVLGDNSFADLIKNWMDLPE) are inka box.

The protein belongs to the INKA family.

The protein localises to the nucleus. Its function is as follows. Inhibitor of the serine/threonine-protein kinase pak4/pak5. Acts by binding pak4/pak5 in a substrate-like manner, inhibiting the protein kinase activity. This is PAK4-inhibitor inka2 from Danio rerio (Zebrafish).